The following is a 142-amino-acid chain: Hemoglobin subunit alpha-5 (142 aa).

Residues 2 to 142 (TFSSAEKAAI…VSAVLVSKYR (141 aa)) form the Globin domain. His-59 contributes to the O2 binding site. His-88 provides a ligand contact to heme b.

This sequence belongs to the globin family. Heterotetramer of two alpha chains and two beta chains. Red blood cells.

Its function is as follows. This is a larval (tadpole) alpha-globin. The chain is Hemoglobin subunit alpha-5 (hba5) from Xenopus laevis (African clawed frog).